The following is a 1374-amino-acid chain: DNA-directed RNA polymerase subunit beta (1374 aa).

It belongs to the RNA polymerase beta chain family. As to quaternary structure, the RNAP catalytic core consists of 2 alpha, 1 beta, 1 beta' and 1 omega subunit. When a sigma factor is associated with the core the holoenzyme is formed, which can initiate transcription.

The enzyme catalyses RNA(n) + a ribonucleoside 5'-triphosphate = RNA(n+1) + diphosphate. DNA-dependent RNA polymerase catalyzes the transcription of DNA into RNA using the four ribonucleoside triphosphates as substrates. The sequence is that of DNA-directed RNA polymerase subunit beta from Acidovorax ebreus (strain TPSY) (Diaphorobacter sp. (strain TPSY)).